The following is a 320-amino-acid chain: Porphobilinogen deaminase (320 aa).

C251 is subject to S-(dipyrrolylmethanemethyl)cysteine.

Belongs to the HMBS family. Monomer. Dipyrromethane is required as a cofactor.

The enzyme catalyses 4 porphobilinogen + H2O = hydroxymethylbilane + 4 NH4(+). Its pathway is porphyrin-containing compound metabolism; protoporphyrin-IX biosynthesis; coproporphyrinogen-III from 5-aminolevulinate: step 2/4. In terms of biological role, tetrapolymerization of the monopyrrole PBG into the hydroxymethylbilane pre-uroporphyrinogen in several discrete steps. The chain is Porphobilinogen deaminase from Phenylobacterium zucineum (strain HLK1).